Reading from the N-terminus, the 208-residue chain is Small ribosomal subunit protein uS4 (208 aa).

Residues 99–165 (RRLDNVVFQL…PRLKEILSSL (67 aa)) enclose the S4 RNA-binding domain.

It belongs to the universal ribosomal protein uS4 family. As to quaternary structure, part of the 30S ribosomal subunit. Contacts protein S5. The interaction surface between S4 and S5 is involved in control of translational fidelity.

Its function is as follows. One of the primary rRNA binding proteins, it binds directly to 16S rRNA where it nucleates assembly of the body of the 30S subunit. Functionally, with S5 and S12 plays an important role in translational accuracy. This chain is Small ribosomal subunit protein uS4, found in Desulfitobacterium hafniense (strain Y51).